The primary structure comprises 374 residues: 3-isopropylmalate dehydrogenase (374 aa).

83–96 serves as a coordination point for NAD(+); sequence GPKWDNLPPEIRPE. 4 residues coordinate substrate: R104, R114, R142, and D231. Residues D231, D255, and D259 each contribute to the Mg(2+) site. 288–300 is an NAD(+) binding site; that stretch reads GSAPDIAGQNKAN.

Belongs to the isocitrate and isopropylmalate dehydrogenases family. LeuB type 1 subfamily. Homodimer. Requires Mg(2+) as cofactor. The cofactor is Mn(2+).

Its subcellular location is the cytoplasm. The enzyme catalyses (2R,3S)-3-isopropylmalate + NAD(+) = 4-methyl-2-oxopentanoate + CO2 + NADH. It functions in the pathway amino-acid biosynthesis; L-leucine biosynthesis; L-leucine from 3-methyl-2-oxobutanoate: step 3/4. Its function is as follows. Catalyzes the oxidation of 3-carboxy-2-hydroxy-4-methylpentanoate (3-isopropylmalate) to 3-carboxy-4-methyl-2-oxopentanoate. The product decarboxylates to 4-methyl-2 oxopentanoate. The sequence is that of 3-isopropylmalate dehydrogenase from Carboxydothermus hydrogenoformans (strain ATCC BAA-161 / DSM 6008 / Z-2901).